Reading from the N-terminus, the 296-residue chain is Ribosomal RNA small subunit methyltransferase J (296 aa).

Residue Asp-205 coordinates S-adenosyl-L-methionine.

This sequence belongs to the methyltransferase superfamily. RsmJ family.

It localises to the cytoplasm. It catalyses the reaction guanosine(1516) in 16S rRNA + S-adenosyl-L-methionine = N(2)-methylguanosine(1516) in 16S rRNA + S-adenosyl-L-homocysteine + H(+). Functionally, specifically methylates the guanosine in position 1516 of 16S rRNA. The chain is Ribosomal RNA small subunit methyltransferase J from Psychrobacter arcticus (strain DSM 17307 / VKM B-2377 / 273-4).